Reading from the N-terminus, the 234-residue chain is UDP-2,3-diacylglucosamine hydrolase (234 aa).

5 residues coordinate Mn(2+): Asp9, His11, Asp42, Asn80, and His115. 80–81 (NR) serves as a coordination point for substrate. 5 residues coordinate substrate: Asp123, Ser161, Lys165, Lys168, and His196. Positions 196 and 198 each coordinate Mn(2+).

The protein belongs to the LpxH family. Mn(2+) is required as a cofactor.

It is found in the cell inner membrane. The enzyme catalyses UDP-2-N,3-O-bis[(3R)-3-hydroxytetradecanoyl]-alpha-D-glucosamine + H2O = 2-N,3-O-bis[(3R)-3-hydroxytetradecanoyl]-alpha-D-glucosaminyl 1-phosphate + UMP + 2 H(+). It participates in glycolipid biosynthesis; lipid IV(A) biosynthesis; lipid IV(A) from (3R)-3-hydroxytetradecanoyl-[acyl-carrier-protein] and UDP-N-acetyl-alpha-D-glucosamine: step 4/6. Hydrolyzes the pyrophosphate bond of UDP-2,3-diacylglucosamine to yield 2,3-diacylglucosamine 1-phosphate (lipid X) and UMP by catalyzing the attack of water at the alpha-P atom. Involved in the biosynthesis of lipid A, a phosphorylated glycolipid that anchors the lipopolysaccharide to the outer membrane of the cell. The sequence is that of UDP-2,3-diacylglucosamine hydrolase from Histophilus somni (strain 129Pt) (Haemophilus somnus).